A 506-amino-acid chain; its full sequence is Kynureninase 1 (506 aa).

Residues leucine 141, threonine 142, 169–172 (FPSD), aspartate 254, histidine 257, and tyrosine 279 contribute to the pyridoxal 5'-phosphate site. An N6-(pyridoxal phosphate)lysine modification is found at lysine 280. The segment covering 303-319 (ETAPTTTPDGTNGNPKT) has biased composition (low complexity). The interval 303–322 (ETAPTTTPDGTNGNPKTISD) is disordered. 2 residues coordinate pyridoxal 5'-phosphate: tryptophan 334 and asparagine 362.

The protein belongs to the kynureninase family. As to quaternary structure, homodimer. Pyridoxal 5'-phosphate serves as cofactor.

The protein localises to the cytoplasm. It carries out the reaction L-kynurenine + H2O = anthranilate + L-alanine + H(+). The enzyme catalyses 3-hydroxy-L-kynurenine + H2O = 3-hydroxyanthranilate + L-alanine + H(+). It participates in amino-acid degradation; L-kynurenine degradation; L-alanine and anthranilate from L-kynurenine: step 1/1. The protein operates within cofactor biosynthesis; NAD(+) biosynthesis; quinolinate from L-kynurenine: step 2/3. In terms of biological role, catalyzes the cleavage of L-kynurenine (L-Kyn) and L-3-hydroxykynurenine (L-3OHKyn) into anthranilic acid (AA) and 3-hydroxyanthranilic acid (3-OHAA), respectively. This Phaeosphaeria nodorum (strain SN15 / ATCC MYA-4574 / FGSC 10173) (Glume blotch fungus) protein is Kynureninase 1.